The following is a 500-amino-acid chain: Cytochrome P450 2D15 (500 aa).

Cys-446 contributes to the heme binding site.

It belongs to the cytochrome P450 family. The cofactor is heme. In terms of tissue distribution, liver. Also detected in several other tissues.

It localises to the endoplasmic reticulum membrane. It is found in the microsome membrane. The enzyme catalyses an organic molecule + reduced [NADPH--hemoprotein reductase] + O2 = an alcohol + oxidized [NADPH--hemoprotein reductase] + H2O + H(+). Its function is as follows. High activity for the hydroxylation of bunitrolol and imipramine; low activity on debrisoquine. The sequence is that of Cytochrome P450 2D15 (CYP2D15) from Canis lupus familiaris (Dog).